A 131-amino-acid polypeptide reads, in one-letter code: MILVDSNIPMYLVGASHPHKLDAQRLLESALSGGERLVTDAEVLQEICHRYVAIKRREAIQPAFDAIIGVVDEVLPIERTDVEHARDALLRYQTLSARDALHIAVMAHHDITRLMSFDRGFDSYPGIKRLA.

The PINc domain maps to Ile-2–Lys-128. Mg(2+) contacts are provided by Asp-5 and Asp-99.

It belongs to the PINc/VapC protein family. Requires Mg(2+) as cofactor.

It is found in the secreted. In terms of biological role, toxic component of a type II toxin-antitoxin (TA) system. An RNase. The cognate antitoxin is VapB13. The polypeptide is Ribonuclease VapC13 (Mycobacterium tuberculosis (strain ATCC 25618 / H37Rv)).